Consider the following 71-residue polypeptide: MNTIEHRLMELEAKVAFQDETIDILNDEIKVHQQLLAKMKRQTELLAEKIKESQSSSSMMSNEPEPPPPHY.

Residues 49–71 (KIKESQSSSSMMSNEPEPPPPHY) form a disordered region.

This sequence belongs to the SlyX family.

The protein is Protein SlyX homolog of Pseudoalteromonas translucida (strain TAC 125).